The following is a 111-amino-acid chain: Disintegrin DS-AN (111 aa).

The signal sequence occupies residues 1-20 (MIQVLLVIICLAVFPYQGSC). A propeptide spanning residues 21 to 47 (IILESGNVNDYEIVYPKKLIVLPTGAM) is cleaved from the precursor. Positions 47-111 (MNSPHPCCDP…PDCPRNPYKD (65 aa)) constitute a Disintegrin domain. Cystine bridges form between Cys53-Cys76, Cys67-Cys73, Cys72-Cys97, and Cys85-Cys104. Residues 89–91 (RGD) carry the Cell attachment site motif.

Heterodimer; disulfide-linked.

The protein localises to the secreted. Functionally, inhibits ADP-induced platelet aggregation in human platelet-rich plasma (IC(50) is 8 uM). The polypeptide is Disintegrin DS-AN (Atheris nitschei (Great lakes bush viper)).